The sequence spans 389 residues: Glutamate 5-kinase (389 aa).

Lys-16 lines the ATP pocket. Residues Ser-56, Asp-143, and Asn-155 each coordinate substrate. 175 to 176 (SD) serves as a coordination point for ATP. One can recognise a PUA domain in the interval 281–358 (AGELHVDEGA…AEIEAILGYA (78 aa)).

The protein belongs to the glutamate 5-kinase family.

It is found in the cytoplasm. The enzyme catalyses L-glutamate + ATP = L-glutamyl 5-phosphate + ADP. The protein operates within amino-acid biosynthesis; L-proline biosynthesis; L-glutamate 5-semialdehyde from L-glutamate: step 1/2. Its function is as follows. Catalyzes the transfer of a phosphate group to glutamate to form L-glutamate 5-phosphate. The chain is Glutamate 5-kinase from Rhizobium etli (strain ATCC 51251 / DSM 11541 / JCM 21823 / NBRC 15573 / CFN 42).